A 53-amino-acid polypeptide reads, in one-letter code: UPF0391 membrane protein Ent638_0536 (53 aa).

2 helical membrane passes run 4-24 and 27-47; these read WGII…GGLA and AAWA…VSLF.

This sequence belongs to the UPF0391 family.

The protein resides in the cell membrane. This is UPF0391 membrane protein Ent638_0536 from Enterobacter sp. (strain 638).